The primary structure comprises 748 residues: Polyribonucleotide nucleotidyltransferase (748 aa).

Positions 484 and 490 each coordinate Mg(2+). Positions 551-610 (PRIETMSVPKDKIRDVIGTGGKVIREIVATTGAKVDIEDDGTVRLSSSDPANIEAAREWI) constitute a KH domain. Residues 620–688 (GKIYNGKVVN…NRGKVRLSMR (69 aa)) enclose the S1 motif domain. The interval 693 to 748 (ETGAELDDNRPPRENAERRGGERPRRDRGPRRESGDRPARRDMEPEFAPAFLRKDS) is disordered. Basic and acidic residues predominate over residues 699-736 (DDNRPPRENAERRGGERPRRDRGPRRESGDRPARRDME).

Belongs to the polyribonucleotide nucleotidyltransferase family. Mg(2+) serves as cofactor.

It localises to the cytoplasm. The catalysed reaction is RNA(n+1) + phosphate = RNA(n) + a ribonucleoside 5'-diphosphate. Its function is as follows. Involved in mRNA degradation. Catalyzes the phosphorolysis of single-stranded polyribonucleotides processively in the 3'- to 5'-direction. The chain is Polyribonucleotide nucleotidyltransferase from Zymomonas mobilis subsp. mobilis (strain ATCC 31821 / ZM4 / CP4).